The sequence spans 426 residues: Glutamate-1-semialdehyde 2,1-aminomutase (426 aa).

Residue K265 is modified to N6-(pyridoxal phosphate)lysine.

This sequence belongs to the class-III pyridoxal-phosphate-dependent aminotransferase family. HemL subfamily. In terms of assembly, homodimer. Pyridoxal 5'-phosphate serves as cofactor.

Its subcellular location is the cytoplasm. The catalysed reaction is (S)-4-amino-5-oxopentanoate = 5-aminolevulinate. It functions in the pathway porphyrin-containing compound metabolism; protoporphyrin-IX biosynthesis; 5-aminolevulinate from L-glutamyl-tRNA(Glu): step 2/2. In Actinobacillus pleuropneumoniae serotype 5b (strain L20), this protein is Glutamate-1-semialdehyde 2,1-aminomutase.